The primary structure comprises 326 residues: Malate dehydrogenase (326 aa).

Residue 11 to 17 participates in NAD(+) binding; sequence GAAGQIG. Substrate contacts are provided by Arg-92 and Arg-98. NAD(+) is bound by residues Asn-105, Gln-112, and 129–131; that span reads VGN. Substrate-binding residues include Asn-131 and Arg-162. His-187 functions as the Proton acceptor in the catalytic mechanism.

The protein belongs to the LDH/MDH superfamily. MDH type 2 family.

The catalysed reaction is (S)-malate + NAD(+) = oxaloacetate + NADH + H(+). Catalyzes the reversible oxidation of malate to oxaloacetate. This chain is Malate dehydrogenase, found in Halorhodospira halophila (strain DSM 244 / SL1) (Ectothiorhodospira halophila (strain DSM 244 / SL1)).